We begin with the raw amino-acid sequence, 567 residues long: Dihydrolipoyllysine-residue acetyltransferase component of pyruvate dehydrogenase complex (567 aa).

Lipoyl-binding domains are found at residues 2–75 and 108–181; these read SKQI…LVLE and IVEV…MRFE. Residues K41 and K147 each carry the N6-lipoyllysine modification. Positions 192–238 are enriched in low complexity; it reads SAPASTSAPQTAAPATTAQAPQAAAPDTTAQAPQAAAPDTTAQAAQS. The segment at 192-249 is disordered; the sequence is SAPASTSAPQTAAPATTAQAPQAAAPDTTAQAPQAAAPDTTAQAAQSNNNVSGLSQEQ. The span at 239–249 shows a compositional bias: polar residues; sequence NNNVSGLSQEQ. Positions 258–295 constitute a Peripheral subunit-binding (PSBD) domain; the sequence is HATPVIRRLAREFGVNLDKVKGTGRKGRIVKEDIEAYV. Residues C484, H540, and D544 contribute to the active site.

It belongs to the 2-oxoacid dehydrogenase family. In terms of assembly, forms a 24-polypeptide structural core with octahedral symmetry. It depends on (R)-lipoate as a cofactor.

It carries out the reaction N(6)-[(R)-dihydrolipoyl]-L-lysyl-[protein] + acetyl-CoA = N(6)-[(R)-S(8)-acetyldihydrolipoyl]-L-lysyl-[protein] + CoA. In terms of biological role, the pyruvate dehydrogenase complex catalyzes the overall conversion of pyruvate to acetyl-CoA and CO(2). It contains multiple copies of three enzymatic components: pyruvate dehydrogenase (E1), dihydrolipoamide acetyltransferase (E2) and lipoamide dehydrogenase (E3). The chain is Dihydrolipoyllysine-residue acetyltransferase component of pyruvate dehydrogenase complex (aceF) from Haemophilus influenzae (strain ATCC 51907 / DSM 11121 / KW20 / Rd).